The following is a 157-amino-acid chain: Succinate dehydrogenase assembly factor 2-A, mitochondrial (157 aa).

The protein belongs to the SDHAF2 family. In terms of assembly, interacts with the flavoprotein subunit within the SDH catalytic dimer.

It is found in the mitochondrion matrix. In terms of biological role, plays an essential role in the assembly of succinate dehydrogenase (SDH), an enzyme complex (also referred to as respiratory complex II) that is a component of both the tricarboxylic acid (TCA) cycle and the mitochondrial electron transport chain, and which couples the oxidation of succinate to fumarate with the reduction of ubiquinone (coenzyme Q) to ubiquinol. Required for flavinylation (covalent attachment of FAD) of the flavoprotein subunit of the SDH catalytic dimer. This Drosophila willistoni (Fruit fly) protein is Succinate dehydrogenase assembly factor 2-A, mitochondrial.